Reading from the N-terminus, the 373-residue chain is Probable tRNA sulfurtransferase (373 aa).

The 105-residue stretch at N54 to I158 folds into the THUMP domain. Residues L176 to F177, N201 to F202, K256, G278, and Q287 each bind ATP.

The protein belongs to the ThiI family.

Its subcellular location is the cytoplasm. It carries out the reaction [ThiI sulfur-carrier protein]-S-sulfanyl-L-cysteine + a uridine in tRNA + 2 reduced [2Fe-2S]-[ferredoxin] + ATP + H(+) = [ThiI sulfur-carrier protein]-L-cysteine + a 4-thiouridine in tRNA + 2 oxidized [2Fe-2S]-[ferredoxin] + AMP + diphosphate. It catalyses the reaction [ThiS sulfur-carrier protein]-C-terminal Gly-Gly-AMP + S-sulfanyl-L-cysteinyl-[cysteine desulfurase] + AH2 = [ThiS sulfur-carrier protein]-C-terminal-Gly-aminoethanethioate + L-cysteinyl-[cysteine desulfurase] + A + AMP + 2 H(+). Its pathway is cofactor biosynthesis; thiamine diphosphate biosynthesis. Functionally, catalyzes the ATP-dependent transfer of a sulfur to tRNA to produce 4-thiouridine in position 8 of tRNAs, which functions as a near-UV photosensor. Also catalyzes the transfer of sulfur to the sulfur carrier protein ThiS, forming ThiS-thiocarboxylate. This is a step in the synthesis of thiazole, in the thiamine biosynthesis pathway. The sulfur is donated as persulfide by IscS. In Saccharolobus islandicus (strain Y.N.15.51 / Yellowstone #2) (Sulfolobus islandicus), this protein is Probable tRNA sulfurtransferase.